The primary structure comprises 817 residues: Myosin-A (817 aa).

Phosphoserine is present on Ser-19. The Myosin motor domain maps to 97–771 (MSFGDIGLLN…GAKMLSKIQR (675 aa)). 191 to 198 (GESGAGKT) contributes to the ATP binding site. The tract at residues 661–671 (PHFIRCIKPNE) is actin-binding. Residues 773–817 (KLVEWENCVSVIEAAIMKYKHKQNVENNVSSLMRVQAHIRKRMVA) form a tail region.

It belongs to the TRAFAC class myosin-kinesin ATPase superfamily. Myosin family. As to quaternary structure, interacts with ACT1.

The protein localises to the cell membrane. Its function is as follows. Myosins are actin-based motor molecules with ATPase activity. Unconventional myosins serve in intracellular movements. Their highly divergent tails are presumed to bind to membranous compartments, which would be moved relative to actin filaments. This is Myosin-A from Plasmodium yoelii yoelii.